The chain runs to 106 residues: Putative defensin-like protein 224 (106 aa).

A signal peptide spans 1–23 (MKTLSLFFTLVILISSCVSNLMA). Intrachain disulfides connect cysteine 60-cysteine 78, cysteine 64-cysteine 84, and cysteine 68-cysteine 86.

It belongs to the DEFL family.

Its subcellular location is the secreted. In Arabidopsis thaliana (Mouse-ear cress), this protein is Putative defensin-like protein 224.